A 325-amino-acid polypeptide reads, in one-letter code: Beta-ketoacyl-[acyl-carrier-protein] synthase III (325 aa).

Catalysis depends on residues Cys116 and His252. Positions Gln253–Arg257 are ACP-binding. Asn282 is a catalytic residue.

Belongs to the thiolase-like superfamily. FabH family. As to quaternary structure, homodimer.

Its subcellular location is the cytoplasm. The catalysed reaction is butanoyl-CoA + malonyl-[ACP] + H(+) = 3-oxohexanoyl-[ACP] + CO2 + CoA. The enzyme catalyses hexanoyl-CoA + malonyl-[ACP] + H(+) = 3-oxooctanoyl-[ACP] + CO2 + CoA. It catalyses the reaction octanoyl-CoA + malonyl-[ACP] + H(+) = 3-oxodecanoyl-[ACP] + CO2 + CoA. It carries out the reaction decanoyl-CoA + malonyl-[ACP] + H(+) = 3-oxododecanoyl-[ACP] + CO2 + CoA. The catalysed reaction is 2-methylpropanoyl-CoA + malonyl-[ACP] + H(+) = 4-methyl-3-oxopentanoyl-[ACP] + CO2 + CoA. The enzyme catalyses 3-methylbutanoyl-CoA + malonyl-[ACP] + H(+) = 5-methyl-3-oxohexanoyl-[ACP] + CO2 + CoA. It catalyses the reaction malonyl-[ACP] + acetyl-CoA + H(+) = 3-oxobutanoyl-[ACP] + CO2 + CoA. It participates in lipid metabolism; fatty acid biosynthesis. Catalyzes the condensation reaction of fatty acid synthesis by the addition to an acyl acceptor of two carbons from malonyl-ACP. Catalyzes the first condensation reaction which initiates fatty acid synthesis and may therefore play a role in governing the total rate of fatty acid production. Possesses both acetoacetyl-ACP synthase and acetyl transacylase activities. Can use a wide range of acyl-CoAs as the primer substrate in vitro, with a slight preference for short, medium-straight chain acyl-CoAs. Can also use branched-chain acyl-CoAs and acetyl-CoA. This Xanthomonas campestris pv. campestris (strain 8004) protein is Beta-ketoacyl-[acyl-carrier-protein] synthase III.